The chain runs to 64 residues: Large ribosomal subunit protein bL35 (64 aa).

The segment covering 1 to 44 has biased composition (basic residues); the sequence is MSKIKSHSGAAKRFKRTANGFKHKQSHTSHILTKKSTKRKRHLR. Positions 1–48 are disordered; it reads MSKIKSHSGAAKRFKRTANGFKHKQSHTSHILTKKSTKRKRHLRSMNQ.

The protein belongs to the bacterial ribosomal protein bL35 family.

The protein is Large ribosomal subunit protein bL35 of Marinomonas sp. (strain MWYL1).